The following is a 129-amino-acid chain: NADH-quinone oxidoreductase subunit A (129 aa).

The next 3 helical transmembrane spans lie at 14-34, 67-87, and 95-115; these read LAIHVALSAGIVAAIIVVAAW, FLIAALFVIFDMEAAILFAWA, and WLGLIEAAVFIGVLLLALVYL.

The protein belongs to the complex I subunit 3 family. As to quaternary structure, NDH-1 is composed of 14 different subunits. Subunits NuoA, H, J, K, L, M, N constitute the membrane sector of the complex.

It is found in the cell inner membrane. It carries out the reaction a quinone + NADH + 5 H(+)(in) = a quinol + NAD(+) + 4 H(+)(out). NDH-1 shuttles electrons from NADH, via FMN and iron-sulfur (Fe-S) centers, to quinones in the respiratory chain. The immediate electron acceptor for the enzyme in this species is believed to be ubiquinone. Couples the redox reaction to proton translocation (for every two electrons transferred, four hydrogen ions are translocated across the cytoplasmic membrane), and thus conserves the redox energy in a proton gradient. The chain is NADH-quinone oxidoreductase subunit A from Rhodopseudomonas palustris (strain BisB5).